The chain runs to 273 residues: Dermonecrotic toxin LsaSicTox-alphaIB1aii (273 aa).

His5 is a catalytic residue. Mg(2+) is bound by residues Glu25 and Asp27. His41 functions as the Nucleophile in the catalytic mechanism. Intrachain disulfides connect Cys45–Cys51 and Cys47–Cys190. Asp85 provides a ligand contact to Mg(2+).

Belongs to the arthropod phospholipase D family. Class II subfamily. Mg(2+) is required as a cofactor. As to expression, expressed by the venom gland.

The protein resides in the secreted. The catalysed reaction is an N-(acyl)-sphingosylphosphocholine = an N-(acyl)-sphingosyl-1,3-cyclic phosphate + choline. It carries out the reaction an N-(acyl)-sphingosylphosphoethanolamine = an N-(acyl)-sphingosyl-1,3-cyclic phosphate + ethanolamine. The enzyme catalyses a 1-acyl-sn-glycero-3-phosphocholine = a 1-acyl-sn-glycero-2,3-cyclic phosphate + choline. It catalyses the reaction a 1-acyl-sn-glycero-3-phosphoethanolamine = a 1-acyl-sn-glycero-2,3-cyclic phosphate + ethanolamine. In terms of biological role, dermonecrotic toxins cleave the phosphodiester linkage between the phosphate and headgroup of certain phospholipids (sphingolipid and lysolipid substrates), forming an alcohol (often choline) and a cyclic phosphate. This toxin acts on sphingomyelin (SM). It may also act on ceramide phosphoethanolamine (CPE), lysophosphatidylcholine (LPC) and lysophosphatidylethanolamine (LPE), but not on lysophosphatidylserine (LPS), and lysophosphatidylglycerol (LPG). It acts by transphosphatidylation, releasing exclusively cyclic phosphate products as second products. Induces dermonecrosis, hemolysis, increased vascular permeability, edema, inflammatory response, and platelet aggregation. This chain is Dermonecrotic toxin LsaSicTox-alphaIB1aii, found in Loxosceles sabina (Tucson recluse spider).